Consider the following 140-residue polypeptide: MAKKITGYIKLQVPAGKANPAPPIGPALGQHGVNIMEFCKAFNAKTQADEGTITPVVITVYADRSFTFITKTPPVPVLIKKAAGIASGSAVPNKTKVGKLTKAQVEEIAKTKMPDLNAASLEAAMRTVEGTARSMGVDIV.

Belongs to the universal ribosomal protein uL11 family. As to quaternary structure, part of the ribosomal stalk of the 50S ribosomal subunit. Interacts with L10 and the large rRNA to form the base of the stalk. L10 forms an elongated spine to which L12 dimers bind in a sequential fashion forming a multimeric L10(L12)X complex. Post-translationally, one or more lysine residues are methylated.

Its function is as follows. Forms part of the ribosomal stalk which helps the ribosome interact with GTP-bound translation factors. In Pelobacter propionicus (strain DSM 2379 / NBRC 103807 / OttBd1), this protein is Large ribosomal subunit protein uL11.